The following is a 344-amino-acid chain: L-rhamnose-proton symporter (344 aa).

10 consecutive transmembrane segments (helical) span residues 4–24 (AITM…CFYA), 38–58 (WSVG…ALLL), 68–88 (FSLS…IGNI), 101–121 (MGIG…TPII), 137–157 (TLLG…AGQL), 175–195 (LVLA…MNAA), 214–234 (LPSY…FCFI), 259–279 (VLLS…YAWG), 290–310 (ISWM…GLVL), and 323–343 (VLSL…MGMA).

It belongs to the L-rhamnose transporter (TC 2.A.7.6) family.

It is found in the cell inner membrane. The catalysed reaction is L-rhamnopyranose(in) + H(+)(in) = L-rhamnopyranose(out) + H(+)(out). Its function is as follows. Uptake of L-rhamnose across the cytoplasmic membrane with the concomitant transport of protons into the cell (symport system). The polypeptide is L-rhamnose-proton symporter (Escherichia coli O17:K52:H18 (strain UMN026 / ExPEC)).